A 193-amino-acid chain; its full sequence is Acyl carrier protein phosphodiesterase (193 aa).

This sequence belongs to the AcpH family.

It catalyses the reaction holo-[ACP] + H2O = apo-[ACP] + (R)-4'-phosphopantetheine + H(+). In terms of biological role, converts holo-ACP to apo-ACP by hydrolytic cleavage of the phosphopantetheine prosthetic group from ACP. This chain is Acyl carrier protein phosphodiesterase, found in Escherichia coli O6:K15:H31 (strain 536 / UPEC).